The primary structure comprises 167 residues: CKLF-like MARVEL transmembrane domain-containing protein 7 (167 aa).

Positions 32–158 (YPLTHGALFK…SLWLSYKITC (127 aa)) constitute an MARVEL domain. 4 helical membrane passes run 35 to 55 (THGA…FICV), 69 to 89 (FEVV…VHLF), 102 to 122 (LSEL…SIVI), and 132 to 152 (LVAG…SLWL).

Belongs to the chemokine-like factor family.

Its subcellular location is the membrane. This is CKLF-like MARVEL transmembrane domain-containing protein 7 (Cmtm7) from Mus musculus (Mouse).